Consider the following 245-residue polypeptide: tRNA pseudouridine synthase A (245 aa).

The active-site Nucleophile is D52. Residue Y111 participates in substrate binding.

This sequence belongs to the tRNA pseudouridine synthase TruA family. Homodimer.

The enzyme catalyses uridine(38/39/40) in tRNA = pseudouridine(38/39/40) in tRNA. Formation of pseudouridine at positions 38, 39 and 40 in the anticodon stem and loop of transfer RNAs. The sequence is that of tRNA pseudouridine synthase A from Rhodospirillum centenum (strain ATCC 51521 / SW).